The sequence spans 133 residues: Transcriptional regulator MraZ (133 aa).

SpoVT-AbrB domains are found at residues 5–47 (TYEH…SKDD) and 76–119 (TVEI…SKNK).

This sequence belongs to the MraZ family. Forms oligomers.

The protein localises to the cytoplasm. The protein resides in the nucleoid. This Mycoplasma mycoides subsp. mycoides SC (strain CCUG 32753 / NCTC 10114 / PG1) protein is Transcriptional regulator MraZ.